Here is a 298-residue protein sequence, read N- to C-terminus: Probable endonuclease 4 (298 aa).

9 residues coordinate Zn(2+): His69, His111, Glu146, Asp180, His183, His215, Asp228, His230, and Glu260.

This sequence belongs to the AP endonuclease 2 family. Zn(2+) is required as a cofactor.

It carries out the reaction Endonucleolytic cleavage to 5'-phosphooligonucleotide end-products.. Endonuclease IV plays a role in DNA repair. It cleaves phosphodiester bonds at apurinic or apyrimidinic (AP) sites, generating a 3'-hydroxyl group and a 5'-terminal sugar phosphate. In Bacillus anthracis (strain A0248), this protein is Probable endonuclease 4.